The primary structure comprises 258 residues: Trans-aconitate 2-methyltransferase (258 aa).

The protein belongs to the methyltransferase superfamily. Tam family.

It is found in the cytoplasm. The catalysed reaction is trans-aconitate + S-adenosyl-L-methionine = (E)-3-(methoxycarbonyl)pent-2-enedioate + S-adenosyl-L-homocysteine. Its function is as follows. Catalyzes the S-adenosylmethionine monomethyl esterification of trans-aconitate. The sequence is that of Trans-aconitate 2-methyltransferase from Yersinia pseudotuberculosis serotype O:1b (strain IP 31758).